The following is a 154-amino-acid chain: Ribosome maturation factor RimP (154 aa).

Belongs to the RimP family.

It is found in the cytoplasm. Its function is as follows. Required for maturation of 30S ribosomal subunits. This is Ribosome maturation factor RimP from Natranaerobius thermophilus (strain ATCC BAA-1301 / DSM 18059 / JW/NM-WN-LF).